A 484-amino-acid polypeptide reads, in one-letter code: Serine protease HTR4 (484 aa).

Residues 1–28 (MARPLQRPAGLGPFVLLWLLLPAPSGRG) form the signal peptide. One can recognise an IGFBP N-terminal domain in the interval 36-114 (PVPRCPAACE…GRPLGTCGCP (79 aa)). 8 disulfide bridges follow: cysteine 40/cysteine 66, cysteine 44/cysteine 68, cysteine 49/cysteine 69, cysteine 55/cysteine 72, cysteine 80/cysteine 94, cysteine 88/cysteine 111, cysteine 113/cysteine 132, and cysteine 121/cysteine 157. Positions 105–159 (GRPLGTCGCPAAGATVCGSDGRTYRSLCALRAENRAARLRGALPAVPVQKGDCGD) constitute a Kazal-like domain. The interval 209 to 369 (ASGFIVSEDG…IPSDRIRQFL (161 aa)) is serine protease. Catalysis depends on charge relay system residues histidine 225, aspartate 255, and serine 333. The PDZ domain occupies 390–472 (LRMLPLTMNL…LSLLVRRKSQ (83 aa)).

The protein belongs to the peptidase S1C family.

The protein localises to the secreted. Functionally, serine protease. The sequence is that of Serine protease HTR4 (HTRA4) from Bos taurus (Bovine).